The following is a 102-amino-acid chain: Chorion protein S15 (102 aa).

The N-terminal stretch at 1–18 (MKFLIAFVAIAFFACVSA) is a signal peptide.

This sequence belongs to the chorion protein S15/S18 family.

The protein localises to the secreted. Functionally, chorion membrane (egg shell) protein; plays a role in protecting the egg from the environment. The protein is Chorion protein S15 (Cp15) of Drosophila grimshawi (Hawaiian fruit fly).